The sequence spans 881 residues: Glutamate--tRNA ligase (881 aa).

Residues 1–480 (MSVRVRLAPS…ILRFKKSIGQ (480 aa)) are glutamyl-tRNA synthetase. A 'HIGH' region motif is present at residues 9-19 (PSPTGNLHIGT). The 'KMSKS' region motif lies at 248-252 (KLSKR). ATP is bound at residue Lys-251. The interval 481 to 881 (EIEDTKIEDT…IKREIFGKPS (401 aa)) is unknown. Residues 488–502 (EDTKKAETTPHKSKG) show a composition bias toward basic and acidic residues. Residues 488–747 (EDTKKAETTP…PTATDAETRE (260 aa)) are disordered. Over residues 522–548 (QTQTTKPPKKGQTATPVATTPTATDVT) the composition is skewed to low complexity. Residues 549–562 (ENTSVGTQETQSQI) show a composition bias toward polar residues. The span at 563–576 (TTPVATTPTATDVT) shows a compositional bias: low complexity. The segment covering 577 to 590 (ENTSVGTQETQSQI) has biased composition (polar residues). A compositionally biased stretch (low complexity) spans 591-604 (TTPVATTPTATDVT). Residues 605–618 (ENTSVETQETQSQI) are compositionally biased toward polar residues. A compositionally biased stretch (low complexity) spans 619 to 632 (TTPVATTPTATDVT). Polar residues predominate over residues 633-646 (ENTSVETQETQSQI). A compositionally biased stretch (low complexity) spans 647–660 (TTPVATTPTATDVT). Positions 661–674 (ENTSVGTQETQSQI) are enriched in polar residues. The span at 675-688 (TTPVATTPTATDVT) shows a compositional bias: low complexity. Positions 689–702 (ENTSVETQETQSQI) are enriched in polar residues. The segment covering 703 to 720 (TTPVATTSTATDVTENTS) has biased composition (low complexity). Over residues 721–730 (VETQETQSQI) the composition is skewed to polar residues. A compositionally biased stretch (low complexity) spans 731 to 742 (TTPVATTPTATD). A run of 2 helical transmembrane segments spans residues 809–829 (LFGW…VIEA) and 832–852 (GIPI…VWFV).

The protein belongs to the class-I aminoacyl-tRNA synthetase family. Glutamate--tRNA ligase type 1 subfamily. In terms of assembly, monomer.

The protein resides in the cytoplasm. The protein localises to the cell membrane. The catalysed reaction is tRNA(Glu) + L-glutamate + ATP = L-glutamyl-tRNA(Glu) + AMP + diphosphate. In terms of biological role, catalyzes the attachment of glutamate to tRNA(Glu) in a two-step reaction: glutamate is first activated by ATP to form Glu-AMP and then transferred to the acceptor end of tRNA(Glu). This is Glutamate--tRNA ligase (gltX) from Trichodesmium erythraeum (strain IMS101).